The following is a 278-amino-acid chain: 3-methyl-2-oxobutanoate hydroxymethyltransferase (278 aa).

The Mg(2+) site is built by aspartate 43 and aspartate 82. 3-methyl-2-oxobutanoate-binding positions include 43–44 (DS), aspartate 82, and lysine 112. Glutamate 114 serves as a coordination point for Mg(2+). Glutamate 181 serves as the catalytic Proton acceptor.

Belongs to the PanB family. Homodecamer; pentamer of dimers. Mg(2+) serves as cofactor.

The protein localises to the cytoplasm. It carries out the reaction 3-methyl-2-oxobutanoate + (6R)-5,10-methylene-5,6,7,8-tetrahydrofolate + H2O = 2-dehydropantoate + (6S)-5,6,7,8-tetrahydrofolate. It functions in the pathway cofactor biosynthesis; (R)-pantothenate biosynthesis; (R)-pantoate from 3-methyl-2-oxobutanoate: step 1/2. In terms of biological role, catalyzes the reversible reaction in which hydroxymethyl group from 5,10-methylenetetrahydrofolate is transferred onto alpha-ketoisovalerate to form ketopantoate. The chain is 3-methyl-2-oxobutanoate hydroxymethyltransferase from Bacillus cereus (strain ATCC 14579 / DSM 31 / CCUG 7414 / JCM 2152 / NBRC 15305 / NCIMB 9373 / NCTC 2599 / NRRL B-3711).